Here is a 495-residue protein sequence, read N- to C-terminus: Nitrogen fixation regulatory protein (495 aa).

Positions 23–93 (HPGLFFTMVE…QEMWQTLLQR (71 aa)) constitute a PAS 1 domain. The 55-residue stretch at 94–148 (QPWRGQLINQARDGGLYLVDIDITPVLNPQGELEHYLAMQRDISVSYTLEQRLRN) folds into the PAC domain. The region spanning 151–174 (TLMEAVLNNIPAAVVVVDEQDRVV) is the PAS 2; truncated domain.

It depends on FAD as a cofactor.

Functionally, required for the inhibition of NifA activity in response to oxygen and low level of fixed nitrogen. This is Nitrogen fixation regulatory protein (nifL) from Klebsiella pneumoniae.